Reading from the N-terminus, the 205-residue chain is GTP cyclohydrolase-2 (205 aa).

Residue 49–53 (RIHSE) participates in GTP binding. Zn(2+) is bound by residues Cys-54, Cys-65, and Cys-67. GTP-binding positions include Gln-70, 92–94 (EGR), and Thr-114. The Proton acceptor role is filled by Asp-126. Arg-128 functions as the Nucleophile in the catalytic mechanism. Residues Thr-149 and Lys-154 each contribute to the GTP site.

Belongs to the GTP cyclohydrolase II family. It depends on Zn(2+) as a cofactor.

The enzyme catalyses GTP + 4 H2O = 2,5-diamino-6-hydroxy-4-(5-phosphoribosylamino)-pyrimidine + formate + 2 phosphate + 3 H(+). It functions in the pathway cofactor biosynthesis; riboflavin biosynthesis; 5-amino-6-(D-ribitylamino)uracil from GTP: step 1/4. Catalyzes the conversion of GTP to 2,5-diamino-6-ribosylamino-4(3H)-pyrimidinone 5'-phosphate (DARP), formate and pyrophosphate. In Shewanella woodyi (strain ATCC 51908 / MS32), this protein is GTP cyclohydrolase-2.